Here is a 153-residue protein sequence, read N- to C-terminus: Ribonuclease 2 (153 aa).

The protein belongs to the BetVI family.

The protein resides in the cytoplasm. In terms of biological role, catalyzes the two-stage endonucleolytic cleavage to 3'-phosphomononucleotides and 3'-phosphooligonucleotides with 2',3'-cyclic phosphate intermediates. The protein is Ribonuclease 2 of Panax ginseng (Korean ginseng).